Consider the following 392-residue polypeptide: ATP phosphoribosyltransferase regulatory subunit (392 aa).

This sequence belongs to the class-II aminoacyl-tRNA synthetase family. HisZ subfamily. As to quaternary structure, heteromultimer composed of HisG and HisZ subunits.

It is found in the cytoplasm. Its pathway is amino-acid biosynthesis; L-histidine biosynthesis; L-histidine from 5-phospho-alpha-D-ribose 1-diphosphate: step 1/9. Functionally, required for the first step of histidine biosynthesis. May allow the feedback regulation of ATP phosphoribosyltransferase activity by histidine. This Prochlorococcus marinus (strain MIT 9211) protein is ATP phosphoribosyltransferase regulatory subunit.